We begin with the raw amino-acid sequence, 625 residues long: MFEEIPTARPDTPLLDEVNSPADLRAFKKEQLPALVRELREFMLYSVGQTGGHFGAGLGVVELTVALHYLYNTPEDRIVWDVGHQAYPHKILTGRREALLNIRQENGISGFPKRDESEYDTFGVGHSSTSIGAALGMSLAARQLKTGRKAVAIIGDGAMSAGMSFEALNHAGDVKADMLVILNDNEMSISKPVGALSSYFARIWASKTYDNIREGGRKVFSGLPSALELARKAEEHMKGMVSPGMMFEELGFNYIGPIDGHDMDHLLTTIANLKDRKGPQFLHVITKKGKGFEPAEGDPIGYHAINKIEPDPKPNVDKSKLPKYCNVFGKWVCDAAEQDDKLVAITPAMKEGSDLIEFADRFPERYFDVAIAEQHAVTLAAGMACDGIKPVVAIYSTFLQRAYDQLIHDVALQNLDVLFAIDRAGLVGEDGPTHAGVYDLSYLRCIPNMVVMAPSDEDECRKMLQTGYEYKGPAAVRYPRGTGQGVDIESTLSTLKIGKSRTLRTGQSGIVICGFGRPTYDALKAANTLDATLLDMRFVKPIDEETLLTHRDAKLIVTVEENAIMGGAGSAVSELLIANNINIPTLHLGLPDQYEEHASHASMLKRVGLDADGIQKSIELKLTHL.

Thiamine diphosphate contacts are provided by residues histidine 84 and 125-127 (GHS). Aspartate 156 is a binding site for Mg(2+). Residues 157–158 (GA), asparagine 185, phenylalanine 292, and glutamate 373 each bind thiamine diphosphate. Residue asparagine 185 coordinates Mg(2+).

The protein belongs to the transketolase family. DXPS subfamily. In terms of assembly, homodimer. It depends on Mg(2+) as a cofactor. The cofactor is thiamine diphosphate.

It catalyses the reaction D-glyceraldehyde 3-phosphate + pyruvate + H(+) = 1-deoxy-D-xylulose 5-phosphate + CO2. It functions in the pathway metabolic intermediate biosynthesis; 1-deoxy-D-xylulose 5-phosphate biosynthesis; 1-deoxy-D-xylulose 5-phosphate from D-glyceraldehyde 3-phosphate and pyruvate: step 1/1. Its function is as follows. Catalyzes the acyloin condensation reaction between C atoms 2 and 3 of pyruvate and glyceraldehyde 3-phosphate to yield 1-deoxy-D-xylulose-5-phosphate (DXP). The chain is 1-deoxy-D-xylulose-5-phosphate synthase from Marinomonas sp. (strain MWYL1).